We begin with the raw amino-acid sequence, 121 residues long: Dihydroneopterin aldolase (121 aa).

Residues glutamate 16 and methionine 111 each coordinate substrate.

Belongs to the archaeal dihydroneopterin aldolase family. Homotetramer.

It catalyses the reaction 7,8-dihydroneopterin = 6-hydroxymethyl-7,8-dihydropterin + glycolaldehyde. The protein operates within cofactor biosynthesis; 5,6,7,8-tetrahydromethanopterin biosynthesis. In terms of biological role, catalyzes the conversion of 7,8-dihydroneopterin (H2Neo) to 6-hydroxymethyl-7,8-dihydropterin (6-HMD). This chain is Dihydroneopterin aldolase, found in Methanopyrus kandleri (strain AV19 / DSM 6324 / JCM 9639 / NBRC 100938).